The primary structure comprises 220 residues: U1 small nuclear ribonucleoprotein C (220 aa).

The Matrin-type zinc-finger motif lies at 4 to 36 (YYCDYCDIYLTHDSMNARKAHNSGRNHVANVRD). 2 stretches are compositionally biased toward pro residues: residues 88 to 130 (PGPP…PFLP) and 147 to 165 (PPFP…PFRP). The segment at 88-220 (PGPPPPGAFP…HPDRLRMLGQ (133 aa)) is disordered. The segment covering 166–200 (PMGMGMPPAPAQAQAQGSPMGMPQQGQQGTFTPTQ) has biased composition (low complexity). Residues 211–220 (HPDRLRMLGQ) are compositionally biased toward basic and acidic residues.

This sequence belongs to the U1 small nuclear ribonucleoprotein C family. U1 snRNP is composed of the 7 core Sm proteins B/B', D1, D2, D3, E, F and G that assemble in a heptameric protein ring on the Sm site of the small nuclear RNA to form the core snRNP, and at least 3 U1 snRNP-specific proteins U1-70K, U1-A and U1-C. U1-C interacts with U1 snRNA and the 5' splice-site region of the pre-mRNA.

Its subcellular location is the nucleus. Functionally, component of the spliceosomal U1 snRNP, which is essential for recognition of the pre-mRNA 5' splice-site and the subsequent assembly of the spliceosome. U1-C is directly involved in initial 5' splice-site recognition for both constitutive and regulated alternative splicing. The interaction with the 5' splice-site seems to precede base-pairing between the pre-mRNA and the U1 snRNA. Stimulates commitment or early (E) complex formation by stabilizing the base pairing of the 5' end of the U1 snRNA and the 5' splice-site region. The sequence is that of U1 small nuclear ribonucleoprotein C from Cryptococcus neoformans var. neoformans serotype D (strain JEC21 / ATCC MYA-565) (Filobasidiella neoformans).